A 474-amino-acid polypeptide reads, in one-letter code: NAD(P) transhydrogenase subunit beta (474 aa).

The next 9 membrane-spanning stretches (helical) occupy residues 4-24 (GLVQ…LAGL), 46-66 (IATI…AMII), 83-103 (MPEL…LVGF), 132-152 (VLTN…AVTF), 181-200 (LAAL…NPES), 202-222 (FPVL…VASI), 229-249 (VVVS…GFIL), 253-273 (LLIV…YIMC), and 321-341 (VIIT…VADI).

This sequence belongs to the PNT beta subunit family. Heterodimer of an alpha and a beta chain.

It is found in the cell inner membrane. It catalyses the reaction NAD(+) + NADPH + H(+)(in) = NADH + NADP(+) + H(+)(out). In terms of biological role, the transhydrogenation between NADH and NADP is coupled to respiration and ATP hydrolysis and functions as a proton pump across the membrane. The protein is NAD(P) transhydrogenase subunit beta (pntB) of Haemophilus influenzae (strain ATCC 51907 / DSM 11121 / KW20 / Rd).